Reading from the N-terminus, the 263-residue chain is Phosphatidylserine decarboxylase proenzyme (263 aa).

Catalysis depends on charge relay system; for autoendoproteolytic cleavage activity residues Asp90, His146, and Ser230. The active-site Schiff-base intermediate with substrate; via pyruvic acid; for decarboxylase activity is the Ser230. Ser230 carries the pyruvic acid (Ser); by autocatalysis modification.

The protein belongs to the phosphatidylserine decarboxylase family. PSD-B subfamily. Prokaryotic type I sub-subfamily. As to quaternary structure, heterodimer of a large membrane-associated beta subunit and a small pyruvoyl-containing alpha subunit. Pyruvate serves as cofactor. Post-translationally, is synthesized initially as an inactive proenzyme. Formation of the active enzyme involves a self-maturation process in which the active site pyruvoyl group is generated from an internal serine residue via an autocatalytic post-translational modification. Two non-identical subunits are generated from the proenzyme in this reaction, and the pyruvate is formed at the N-terminus of the alpha chain, which is derived from the carboxyl end of the proenzyme. The autoendoproteolytic cleavage occurs by a canonical serine protease mechanism, in which the side chain hydroxyl group of the serine supplies its oxygen atom to form the C-terminus of the beta chain, while the remainder of the serine residue undergoes an oxidative deamination to produce ammonia and the pyruvoyl prosthetic group on the alpha chain. During this reaction, the Ser that is part of the protease active site of the proenzyme becomes the pyruvoyl prosthetic group, which constitutes an essential element of the active site of the mature decarboxylase.

It localises to the cell membrane. It catalyses the reaction a 1,2-diacyl-sn-glycero-3-phospho-L-serine + H(+) = a 1,2-diacyl-sn-glycero-3-phosphoethanolamine + CO2. It participates in phospholipid metabolism; phosphatidylethanolamine biosynthesis; phosphatidylethanolamine from CDP-diacylglycerol: step 2/2. Functionally, catalyzes the formation of phosphatidylethanolamine (PtdEtn) from phosphatidylserine (PtdSer). This is Phosphatidylserine decarboxylase proenzyme from Bacillus subtilis (strain 168).